A 118-amino-acid chain; its full sequence is V-type proton ATPase subunit G 3 (118 aa).

Residues 1–12 (MASQSQGIQQLL) are compositionally biased toward polar residues. The tract at residues 1–37 (MASQSQGIQQLLQAEKRAKDKLEEAKKRKNKRLRQAK) is disordered. Residues 3 to 53 (SQSQGIQQLLQAEKRAKDKLEEAKKRKNKRLRQAKEEATADIDQYRLKREG) adopt a coiled-coil conformation. Basic and acidic residues predominate over residues 14–26 (AEKRAKDKLEEAK).

Belongs to the V-ATPase G subunit family. In terms of assembly, V-ATPase is a heteromultimeric enzyme made up of two complexes: the ATP-hydrolytic V1 complex and the proton translocation V0 complex. The V1 complex consists of three catalytic AB heterodimers that form a heterohexamer, three peripheral stalks each consisting of EG heterodimers, one central rotor including subunits D and F, and the regulatory subunits C and H. The proton translocation complex V0 consists of the proton transport subunit a, a ring of proteolipid subunits c9c'', rotary subunit d, subunits e and f, and two accessory subunits.

Subunit of the V1 complex of vacuolar(H+)-ATPase (V-ATPase), a multisubunit enzyme composed of a peripheral complex (V1) that hydrolyzes ATP and a membrane integral complex (V0) that translocates protons. V-ATPase is responsible for acidifying and maintaining the pH of intracellular compartments and in some cell types, is targeted to the plasma membrane, where it is responsible for acidifying the extracellular environment. This Xenopus tropicalis (Western clawed frog) protein is V-type proton ATPase subunit G 3 (atp6v1g3).